The primary structure comprises 65 residues: Disintegrin VLO4 (65 aa).

In terms of domain architecture, Disintegrin spans 1 to 65 (MNSGNPCCDP…PDCPRNPWKG (65 aa)). 4 disulfide bridges follow: Cys7–Cys30, Cys21–Cys27, Cys26–Cys51, and Cys39–Cys58. Positions 43–45 (RGD) match the Cell attachment site motif.

The protein belongs to the disintegrin family. Dimeric disintegrin subfamily. In terms of assembly, homodimer; disulfide-linked. Expressed by the venom gland.

The protein resides in the secreted. Functionally, poor inhibitor of platelet aggregation. The disintegrin inhibits the adhesion of cells expressing the RGD-dependent integrin alpha-5/beta-1 (ITGA5/ITGB1) to immobilized fibronectin. Inhibition on alpha-2b/beta-3 (ITGA2B/ITGB3) is low. The chain is Disintegrin VLO4 from Macrovipera lebetina obtusa (Levant blunt-nosed viper).